We begin with the raw amino-acid sequence, 501 residues long: uncharacterized protein (501 aa).

It belongs to the UbiD family.

This is an uncharacterized protein from Synechocystis sp. (strain ATCC 27184 / PCC 6803 / Kazusa).